Reading from the N-terminus, the 445-residue chain is MKEKVIVIGGGLAGSEAAWRLANEGHRVILYEMRPKKMTPAHKTGNLAELVCSNTLGGLELTTGAGLLKAEMQKLGSLVIEAAKVARVPAGGALGVDRKIFSEYITEKIESHPNITLIREEVKEIPEDEVVVIATGPLTSDALSEKIKELVGYDTLYFYDAIAPIVEAESVDFSKGFWGSRYGKGGDDYFNCVLTEEEYKKFYEELLKAEKVKPKDFEKAVHFEGCLPIEEMAERGYKTLLFGPMKPVGLVDPRTGKEPFAVVQLRKENKEGTLLSLVGFQTKLTYKEQKRVFRLIPCLRNAVFVRLGSMHRNTFIQSNKVLTHYLNLKKKENIFFAGQITGVEGYVASSATGILAGINAGRLARGEKPLKAPTETMLGALVNYIVTKEGELQPMNPVFGLLPPLEKKVRDKKKRKELMAKRALETMEKWIKENNLVPEGLVKVC.

An FAD-binding site is contributed by 9–14 (GGGLAG).

This sequence belongs to the MnmG family. TrmFO subfamily. Requires FAD as cofactor.

The protein localises to the cytoplasm. It catalyses the reaction uridine(54) in tRNA + (6R)-5,10-methylene-5,6,7,8-tetrahydrofolate + NADH + H(+) = 5-methyluridine(54) in tRNA + (6S)-5,6,7,8-tetrahydrofolate + NAD(+). The enzyme catalyses uridine(54) in tRNA + (6R)-5,10-methylene-5,6,7,8-tetrahydrofolate + NADPH + H(+) = 5-methyluridine(54) in tRNA + (6S)-5,6,7,8-tetrahydrofolate + NADP(+). In terms of biological role, catalyzes the folate-dependent formation of 5-methyl-uridine at position 54 (M-5-U54) in all tRNAs. The sequence is that of Methylenetetrahydrofolate--tRNA-(uracil-5-)-methyltransferase TrmFO from Aquifex aeolicus (strain VF5).